A 280-amino-acid chain; its full sequence is Phosphatidylserine decarboxylase proenzyme (280 aa).

Residues D88, H144, and S247 each act as charge relay system; for autoendoproteolytic cleavage activity in the active site. Residue S247 is the Schiff-base intermediate with substrate; via pyruvic acid; for decarboxylase activity of the active site. S247 bears the Pyruvic acid (Ser); by autocatalysis mark.

It belongs to the phosphatidylserine decarboxylase family. PSD-B subfamily. Prokaryotic type I sub-subfamily. Heterodimer of a large membrane-associated beta subunit and a small pyruvoyl-containing alpha subunit. The cofactor is pyruvate. In terms of processing, is synthesized initially as an inactive proenzyme. Formation of the active enzyme involves a self-maturation process in which the active site pyruvoyl group is generated from an internal serine residue via an autocatalytic post-translational modification. Two non-identical subunits are generated from the proenzyme in this reaction, and the pyruvate is formed at the N-terminus of the alpha chain, which is derived from the carboxyl end of the proenzyme. The autoendoproteolytic cleavage occurs by a canonical serine protease mechanism, in which the side chain hydroxyl group of the serine supplies its oxygen atom to form the C-terminus of the beta chain, while the remainder of the serine residue undergoes an oxidative deamination to produce ammonia and the pyruvoyl prosthetic group on the alpha chain. During this reaction, the Ser that is part of the protease active site of the proenzyme becomes the pyruvoyl prosthetic group, which constitutes an essential element of the active site of the mature decarboxylase.

It localises to the cell membrane. The catalysed reaction is a 1,2-diacyl-sn-glycero-3-phospho-L-serine + H(+) = a 1,2-diacyl-sn-glycero-3-phosphoethanolamine + CO2. It functions in the pathway phospholipid metabolism; phosphatidylethanolamine biosynthesis; phosphatidylethanolamine from CDP-diacylglycerol: step 2/2. In terms of biological role, catalyzes the formation of phosphatidylethanolamine (PtdEtn) from phosphatidylserine (PtdSer). This Stenotrophomonas maltophilia (strain R551-3) protein is Phosphatidylserine decarboxylase proenzyme.